We begin with the raw amino-acid sequence, 230 residues long: UPF0173 metal-dependent hydrolase Rsph17029_0942 (230 aa).

Belongs to the UPF0173 family.

This is UPF0173 metal-dependent hydrolase Rsph17029_0942 from Cereibacter sphaeroides (strain ATCC 17029 / ATH 2.4.9) (Rhodobacter sphaeroides).